Reading from the N-terminus, the 280-residue chain is Formamidopyrimidine-DNA glycosylase (280 aa).

Pro-2 (schiff-base intermediate with DNA) is an active-site residue. The active-site Proton donor is the Glu-3. Residue Lys-60 is the Proton donor; for beta-elimination activity of the active site. Residues His-93 and Arg-112 each coordinate DNA. The segment at 240–274 (YVYGQHSKPCRVCGADIIKIKVGGRGTHLCPTCQP) adopts an FPG-type zinc-finger fold. Catalysis depends on Arg-264, which acts as the Proton donor; for delta-elimination activity.

Belongs to the FPG family. Monomer. Zn(2+) is required as a cofactor.

The catalysed reaction is Hydrolysis of DNA containing ring-opened 7-methylguanine residues, releasing 2,6-diamino-4-hydroxy-5-(N-methyl)formamidopyrimidine.. The enzyme catalyses 2'-deoxyribonucleotide-(2'-deoxyribose 5'-phosphate)-2'-deoxyribonucleotide-DNA = a 3'-end 2'-deoxyribonucleotide-(2,3-dehydro-2,3-deoxyribose 5'-phosphate)-DNA + a 5'-end 5'-phospho-2'-deoxyribonucleoside-DNA + H(+). In terms of biological role, involved in base excision repair of DNA damaged by oxidation or by mutagenic agents. Acts as a DNA glycosylase that recognizes and removes damaged bases. Has a preference for oxidized purines, such as 7,8-dihydro-8-oxoguanine (8-oxoG). Has AP (apurinic/apyrimidinic) lyase activity and introduces nicks in the DNA strand. Cleaves the DNA backbone by beta-delta elimination to generate a single-strand break at the site of the removed base with both 3'- and 5'-phosphates. The sequence is that of Formamidopyrimidine-DNA glycosylase from Oceanobacillus iheyensis (strain DSM 14371 / CIP 107618 / JCM 11309 / KCTC 3954 / HTE831).